The chain runs to 729 residues: Rab-like protein 6 (729 aa).

N-acetylmethionine is present on Met-1. The small GTPase-like stretch occupies residues 39–279 (GVQYNMKIVI…IFLEMMEARS (241 aa)). GTP-binding positions include 50 to 57 (GDRNTGKT), 100 to 104 (DVVDK), and 177 to 179 (YRD). Positions 281-729 (GHASPLAANG…HPGGGDYEEL (449 aa)) are disordered. The segment covering 290-315 (GQSPSPGSQSPVVPAGAVSTGSSSPG) has biased composition (low complexity). Residues 331 to 351 (SSVPPVPPSEALPPPACPSAP) show a composition bias toward pro residues. The segment covering 395–416 (PDDRLDRSFLEDTTPARDEKKV) has biased composition (basic and acidic residues). A phosphoserine mark is found at Ser-402, Ser-425, Ser-427, Ser-470, Ser-471, Ser-492, Ser-525, and Ser-577. The segment covering 489–502 (QQCSEPETKWSSIP) has biased composition (polar residues). The segment covering 581 to 595 (DTQRRADDFPVRDDP) has biased composition (basic and acidic residues). Ser-596 is modified (phosphoserine). Residues 596 to 605 (SDVTDEDEGP) are compositionally biased toward acidic residues. At Thr-599 the chain carries Phosphothreonine. Residues 606 to 615 (AEPPPPPKLP) show a composition bias toward pro residues. Over residues 635 to 652 (AGPKESSEEGKEGKTPSK) the composition is skewed to basic and acidic residues. Residues Ser-640 and Ser-641 each carry the phosphoserine modification. Residues 655 to 693 (KKKKKKGKEEEEKAAKKKSKHKKSKDKEEGKEERRRRQQ) are interaction with CDKN2A. Basic residues predominate over residues 669–678 (AKKKSKHKKS). The span at 679-689 (KDKEEGKEERR) shows a compositional bias: basic and acidic residues. Gly residues predominate over residues 711–729 (LGGGAPGGRHPGGGDYEEL).

The protein belongs to the small GTPase superfamily. Rab family. Post-translationally, isoform 1 is O-glycosylated, while other isoforms are not.

The protein resides in the cytoplasm. Its subcellular location is the nucleus. Functionally, may enhance cellular proliferation. May reduce growth inhibitory activity of CDKN2A. This is Rab-like protein 6 (RABL6) from Homo sapiens (Human).